The chain runs to 335 residues: Aliphatic sulfonates import ATP-binding protein SsuB (335 aa).

The ABC transporter domain occupies 74–293 (VRLTRVSKRY…ARASAAFAAL (220 aa)). An ATP-binding site is contributed by 106 to 113 (GRSGCGKS). Residues 308 to 335 (APAAPNAAGPEGASRGRAAPASGLRWAV) are disordered.

This sequence belongs to the ABC transporter superfamily. Aliphatic sulfonates importer (TC 3.A.1.17.2) family. In terms of assembly, the complex is composed of two ATP-binding proteins (SsuB), two transmembrane proteins (SsuC) and a solute-binding protein (SsuA).

The protein resides in the cell inner membrane. The catalysed reaction is ATP + H2O + aliphatic sulfonate-[sulfonate-binding protein]Side 1 = ADP + phosphate + aliphatic sulfonateSide 2 + [sulfonate-binding protein]Side 1.. Part of the ABC transporter complex SsuABC involved in aliphatic sulfonates import. Responsible for energy coupling to the transport system. The sequence is that of Aliphatic sulfonates import ATP-binding protein SsuB from Burkholderia mallei (strain ATCC 23344).